The chain runs to 106 residues: Nucleoid-associated protein DP1429 (106 aa).

Belongs to the YbaB/EbfC family. Homodimer.

The protein resides in the cytoplasm. The protein localises to the nucleoid. Functionally, binds to DNA and alters its conformation. May be involved in regulation of gene expression, nucleoid organization and DNA protection. The polypeptide is Nucleoid-associated protein DP1429 (Desulfotalea psychrophila (strain LSv54 / DSM 12343)).